Reading from the N-terminus, the 660-residue chain is Phosphatidylinositol-3-phosphate phosphatase MTMR7 (660 aa).

The Myotubularin phosphatase domain occupies 126 to 504 (GWVLIDLSEE…FMYKFWSGMY (379 aa)). A 1,2-diacyl-sn-glycero-3-phospho-(1D-myo-inositol-3-phosphate)-binding residues include Asn-250, Asn-275, and Ile-276. Residue Cys-338 is the Phosphocysteine intermediate of the active site. Ser-339, Asp-340, Gly-341, Trp-342, Asp-343, Arg-344, and Arg-384 together coordinate a 1,2-diacyl-sn-glycero-3-phospho-(1D-myo-inositol-3-phosphate). Residues 521–551 (LMAVKEETQQLEEELEALEERLEKIQKVQLN) adopt a coiled-coil conformation. The tract at residues 554 to 660 (KVKSKQSEPS…DSDEAVFLTA (107 aa)) is disordered. Residues 566 to 596 (SGFSTSDNSIANTPQDYSGNMKSFPSRSPSQ) show a composition bias toward polar residues. A Phosphothreonine modification is found at Thr-578. Residues 641–653 (APSEDSGKDRDSD) are compositionally biased toward basic and acidic residues.

It belongs to the protein-tyrosine phosphatase family. Non-receptor class myotubularin subfamily. As to quaternary structure, heterodimer (via C-terminus) with MTMR9 (via coiled coil domain); the interaction enhances MTMR7 catalytic activity. Does not homodimerize. Interacts with RAB1B (in GDP-bound form). In terms of tissue distribution, expressed specifically in brain.

It localises to the cytoplasm. The protein localises to the endomembrane system. It carries out the reaction a 1,2-diacyl-sn-glycero-3-phospho-(1D-myo-inositol-3-phosphate) + H2O = a 1,2-diacyl-sn-glycero-3-phospho-(1D-myo-inositol) + phosphate. The catalysed reaction is 1D-myo-inositol 1,3-bisphosphate + H2O = 1D-myo-inositol 1-phosphate + phosphate. Its activity is regulated as follows. Interaction with MTMR9 increases phosphatase activity. Functionally, lipid phosphatase that specifically dephosphorylates the D-3 position of phosphatidylinositol 3-phosphate (PtdIns(3)P) and inositol 1,3-bisphosphate (Ins(1,3)P2). This Homo sapiens (Human) protein is Phosphatidylinositol-3-phosphate phosphatase MTMR7.